The sequence spans 151 residues: Regulatory protein RecX (151 aa).

Belongs to the RecX family.

The protein localises to the cytoplasm. Modulates RecA activity. This is Regulatory protein RecX from Actinobacillus pleuropneumoniae serotype 5b (strain L20).